Reading from the N-terminus, the 410-residue chain is Serine hydroxymethyltransferase (410 aa).

Residues Leu116 and 120 to 122 contribute to the (6S)-5,6,7,8-tetrahydrofolate site; that span reads GHL. Lys225 carries the post-translational modification N6-(pyridoxal phosphate)lysine. 349 to 351 provides a ligand contact to (6S)-5,6,7,8-tetrahydrofolate; the sequence is SPF.

Belongs to the SHMT family. In terms of assembly, homodimer. The cofactor is pyridoxal 5'-phosphate.

It localises to the cytoplasm. It catalyses the reaction (6R)-5,10-methylene-5,6,7,8-tetrahydrofolate + glycine + H2O = (6S)-5,6,7,8-tetrahydrofolate + L-serine. It functions in the pathway one-carbon metabolism; tetrahydrofolate interconversion. Its pathway is amino-acid biosynthesis; glycine biosynthesis; glycine from L-serine: step 1/1. In terms of biological role, catalyzes the reversible interconversion of serine and glycine with tetrahydrofolate (THF) serving as the one-carbon carrier. This reaction serves as the major source of one-carbon groups required for the biosynthesis of purines, thymidylate, methionine, and other important biomolecules. Also exhibits THF-independent aldolase activity toward beta-hydroxyamino acids, producing glycine and aldehydes, via a retro-aldol mechanism. This is Serine hydroxymethyltransferase from Leuconostoc citreum (strain KM20).